Here is a 418-residue protein sequence, read N- to C-terminus: Tyrosine--tRNA ligase (418 aa).

Residue tyrosine 34 coordinates L-tyrosine. A 'HIGH' region motif is present at residues 39-48; sequence PTADSLHLGH. The L-tyrosine site is built by tyrosine 169 and glutamine 173. A 'KMSKS' region motif is present at residues 229 to 233; that stretch reads KFGKS. Residue lysine 232 participates in ATP binding. The 67-residue stretch at 352–418 folds into the S4 RNA-binding domain; the sequence is LNIVDMLVTA…GKKKYAVLTY (67 aa).

It belongs to the class-I aminoacyl-tRNA synthetase family. TyrS type 1 subfamily. In terms of assembly, homodimer.

It is found in the cytoplasm. The enzyme catalyses tRNA(Tyr) + L-tyrosine + ATP = L-tyrosyl-tRNA(Tyr) + AMP + diphosphate + H(+). In terms of biological role, catalyzes the attachment of tyrosine to tRNA(Tyr) in a two-step reaction: tyrosine is first activated by ATP to form Tyr-AMP and then transferred to the acceptor end of tRNA(Tyr). In Streptococcus equi subsp. zooepidemicus (strain H70), this protein is Tyrosine--tRNA ligase.